Here is a 96-residue protein sequence, read N- to C-terminus: Ferredoxin (96 aa).

Positions 4–94 (YKVKLLTPEG…DVVIETHKEE (91 aa)) constitute a 2Fe-2S ferredoxin-type domain. [2Fe-2S] cluster is bound by residues cysteine 40, cysteine 45, cysteine 48, and cysteine 78.

This sequence belongs to the 2Fe2S plant-type ferredoxin family. Requires [2Fe-2S] cluster as cofactor.

The protein localises to the plastid. Its subcellular location is the chloroplast. Ferredoxins are iron-sulfur proteins that transfer electrons in a wide variety of metabolic reactions. The protein is Ferredoxin of Panax ginseng (Korean ginseng).